The primary structure comprises 239 residues: Phosphoribosylaminoimidazole-succinocarboxamide synthase (239 aa).

It belongs to the SAICAR synthetase family.

It catalyses the reaction 5-amino-1-(5-phospho-D-ribosyl)imidazole-4-carboxylate + L-aspartate + ATP = (2S)-2-[5-amino-1-(5-phospho-beta-D-ribosyl)imidazole-4-carboxamido]succinate + ADP + phosphate + 2 H(+). It functions in the pathway purine metabolism; IMP biosynthesis via de novo pathway; 5-amino-1-(5-phospho-D-ribosyl)imidazole-4-carboxamide from 5-amino-1-(5-phospho-D-ribosyl)imidazole-4-carboxylate: step 1/2. The chain is Phosphoribosylaminoimidazole-succinocarboxamide synthase from Campylobacter hominis (strain ATCC BAA-381 / DSM 21671 / CCUG 45161 / LMG 19568 / NCTC 13146 / CH001A).